The chain runs to 280 residues: Phosphatidylglycerol--prolipoprotein diacylglyceryl transferase (280 aa).

Transmembrane regions (helical) follow at residues 26-46 (LAIH…WFYA), 71-91 (FILW…ILFY), 106-126 (IWNG…AMIL), and 132-152 (GIPV…GLLF). R154 contacts a 1,2-diacyl-sn-glycero-3-phospho-(1'-sn-glycerol). A run of 3 helical transmembrane segments spans residues 193 to 213 (GLEG…FKAL), 217 to 237 (GTVT…VEFF), and 251 to 271 (WLTM…WAVL).

This sequence belongs to the Lgt family.

It is found in the cell inner membrane. It catalyses the reaction L-cysteinyl-[prolipoprotein] + a 1,2-diacyl-sn-glycero-3-phospho-(1'-sn-glycerol) = an S-1,2-diacyl-sn-glyceryl-L-cysteinyl-[prolipoprotein] + sn-glycerol 1-phosphate + H(+). The protein operates within protein modification; lipoprotein biosynthesis (diacylglyceryl transfer). Catalyzes the transfer of the diacylglyceryl group from phosphatidylglycerol to the sulfhydryl group of the N-terminal cysteine of a prolipoprotein, the first step in the formation of mature lipoproteins. This Agrobacterium fabrum (strain C58 / ATCC 33970) (Agrobacterium tumefaciens (strain C58)) protein is Phosphatidylglycerol--prolipoprotein diacylglyceryl transferase.